The chain runs to 218 residues: Glycerol-3-phosphate acyltransferase (218 aa).

Transmembrane regions (helical) follow at residues 3-23, 53-73, 82-102, 112-132, 142-162, and 166-186; these read FAIF…YWIA, GFPV…LSGI, FQLA…FLGF, LGVF…VFLV, IGSI…SILL, and EVSY…ILTH.

It belongs to the PlsY family. In terms of assembly, probably interacts with PlsX.

The protein resides in the cell inner membrane. It catalyses the reaction an acyl phosphate + sn-glycerol 3-phosphate = a 1-acyl-sn-glycero-3-phosphate + phosphate. It functions in the pathway lipid metabolism; phospholipid metabolism. In terms of biological role, catalyzes the transfer of an acyl group from acyl-phosphate (acyl-PO(4)) to glycerol-3-phosphate (G3P) to form lysophosphatidic acid (LPA). This enzyme utilizes acyl-phosphate as fatty acyl donor, but not acyl-CoA or acyl-ACP. The sequence is that of Glycerol-3-phosphate acyltransferase from Leptospira borgpetersenii serovar Hardjo-bovis (strain JB197).